Reading from the N-terminus, the 250-residue chain is 3-deoxy-manno-octulosonate cytidylyltransferase (250 aa).

Belongs to the KdsB family.

The protein resides in the cytoplasm. The catalysed reaction is 3-deoxy-alpha-D-manno-oct-2-ulosonate + CTP = CMP-3-deoxy-beta-D-manno-octulosonate + diphosphate. It participates in nucleotide-sugar biosynthesis; CMP-3-deoxy-D-manno-octulosonate biosynthesis; CMP-3-deoxy-D-manno-octulosonate from 3-deoxy-D-manno-octulosonate and CTP: step 1/1. It functions in the pathway bacterial outer membrane biogenesis; lipopolysaccharide biosynthesis. Activates KDO (a required 8-carbon sugar) for incorporation into bacterial lipopolysaccharide in Gram-negative bacteria. This Rhodopirellula baltica (strain DSM 10527 / NCIMB 13988 / SH1) protein is 3-deoxy-manno-octulosonate cytidylyltransferase.